A 380-amino-acid polypeptide reads, in one-letter code: Tryptophan--tRNA ligase (380 aa).

Positions 81 to 89 (PSLGMHIGH) match the 'HIGH' region motif. The 'KMSKS' region signature appears at 253–257 (KMSSS).

Belongs to the class-I aminoacyl-tRNA synthetase family.

It is found in the cytoplasm. The enzyme catalyses tRNA(Trp) + L-tryptophan + ATP = L-tryptophyl-tRNA(Trp) + AMP + diphosphate + H(+). The chain is Tryptophan--tRNA ligase from Saccharolobus solfataricus (strain ATCC 35092 / DSM 1617 / JCM 11322 / P2) (Sulfolobus solfataricus).